We begin with the raw amino-acid sequence, 286 residues long: MRLIVVSGQSGAGKSVALRVLEDLGYYCVDNLPVSLLTAFIQSVQGSQQNVAVSIDIRNLPKEPSLVQDVLDQLKQNNDVSMLFLDASKETLLKRYSETRRIHPLSLSQSKPSLAQAIELEKQLLGPLKEQADLLLDSSNQSLHELSETVRMRIEGRERKDLVMVFQSFGFKYGLPTDADYVFDVRFLPNPHWEPDLRPLTGLDAPIKSFLEGHSEVMELKQQIQKFFEYWLPMLEKNNRSYLTIAIGCTGGKHRSVYLTQQLGEYFAQLGHQVQIRHTSLEKQQS.

8-15 lines the ATP pocket; sequence GQSGAGKS. Residue 56 to 59 participates in GTP binding; it reads DIRN.

It belongs to the RapZ-like family.

Functionally, displays ATPase and GTPase activities. The chain is Nucleotide-binding protein VC0395_A2112/VC395_2645 from Vibrio cholerae serotype O1 (strain ATCC 39541 / Classical Ogawa 395 / O395).